A 603-amino-acid polypeptide reads, in one-letter code: NADH-ubiquinone oxidoreductase chain 5 (603 aa).

The next 15 helical transmembrane spans lie at 38–58, 87–107, 122–142, 144–160, 171–191, 211–233, 241–261, 272–292, 301–320, 325–347, 370–390, 407–429, 458–478, 482–502, and 582–602; these read SIVA…MCLD, MMFI…SLWY, LIFL…QLFI, WEGV…WWYA, AILY…WFIL, TPLL…HPWL, TPVS…FLLI, LIQT…AVCA, IVAF…IGIN, AFLH…GSII, STSL…TGFY, WALS…MILL, AAGS…ASPF, IPLY…LTAL, and GMIK…LLLI.

This sequence belongs to the complex I subunit 5 family. As to quaternary structure, core subunit of respiratory chain NADH dehydrogenase (Complex I) which is composed of 45 different subunits.

It localises to the mitochondrion inner membrane. It catalyses the reaction a ubiquinone + NADH + 5 H(+)(in) = a ubiquinol + NAD(+) + 4 H(+)(out). Functionally, core subunit of the mitochondrial membrane respiratory chain NADH dehydrogenase (Complex I) which catalyzes electron transfer from NADH through the respiratory chain, using ubiquinone as an electron acceptor. Essential for the catalytic activity and assembly of complex I. The chain is NADH-ubiquinone oxidoreductase chain 5 (MT-ND5) from Homo sapiens (Human).